Here is a 207-residue protein sequence, read N- to C-terminus: MTYVVGLTGGIGSGKSTVADLFAELGVSVIDADVVARQVVEKGSPLLAEIAEHFGEEILLADGSLNRTALREKVFADESQKQWLNQLLHPAIRREMLKQLAVQRAPYCLFVVPLLIENKLTALCQRILVVDVSEQTQLERANRRDNNQLALIKNIMQSQVSRAERLKYADDVINNDEDLARNLPQLKQKVLDLHHLYLQFAEIFNER.

One can recognise a DPCK domain in the interval 4-204 (VVGLTGGIGS…HLYLQFAEIF (201 aa)). 12–17 (GSGKST) is a binding site for ATP.

Belongs to the CoaE family.

Its subcellular location is the cytoplasm. It catalyses the reaction 3'-dephospho-CoA + ATP = ADP + CoA + H(+). The protein operates within cofactor biosynthesis; coenzyme A biosynthesis; CoA from (R)-pantothenate: step 5/5. Functionally, catalyzes the phosphorylation of the 3'-hydroxyl group of dephosphocoenzyme A to form coenzyme A. In Aggregatibacter actinomycetemcomitans (Actinobacillus actinomycetemcomitans), this protein is Dephospho-CoA kinase.